Here is a 548-residue protein sequence, read N- to C-terminus: Natural resistance-associated macrophage protein 1 (548 aa).

The interval 1-38 (MSGDTGPPKQGGTRYGSISSPPSPEPQQAPPGGTYLSE) is disordered. Residues 1 to 55 (MSGDTGPPKQGGTRYGSISSPPSPEPQQAPPGGTYLSEKIPIPDTESGTFSLRKL) lie on the Cytoplasmic side of the membrane. A helical transmembrane segment spans residues 56–73 (WAFTGPGFLMSIAFLDPG). Residues 74 to 82 (NIESDLQAG) are Extracellular-facing. The helical transmembrane segment at 83-102 (AVAGFKLLWVLLWATVLGLL) threads the bilayer. At 103-139 (CQRLAARLGVVTGKDLGEVCHLYYPKVPRILLWLTIE) the chain is on the cytoplasmic side. The chain crosses the membrane as a helical span at residues 140–160 (LAIVGSDMQEVIGTAIAFSLL). Residues 161–164 (SAGR) lie on the Extracellular side of the membrane. Residues 165 to 184 (IPLWGGVLITIVDAFFFLFL) traverse the membrane as a helical segment. The Cytoplasmic portion of the chain corresponds to 185 to 193 (DNYGLRKLE). The helical transmembrane segment at 194-214 (AFFGFLITIMALTFGYEYVVA) threads the bilayer. Residues 215–237 (QPAQGALLQGLFLPSCPGCGQPE) are Extracellular-facing. A helical membrane pass occupies residues 238–256 (LLQAVGIIGAIIMPHNIYL). At 257-284 (HSSLVKSREVDRSRRADIREANMYFLIE) the chain is on the cytoplasmic side. Residues 285-304 (ATIALSVSFLINLFVMAVFG) traverse the membrane as a helical segment. At 305–346 (QAFYKQTNQAAFNICANSSLQDYAPIFPRNNLTVAVDIYQGG) the chain is on the extracellular side. Residues asparagine 321 and asparagine 335 are each glycosylated (N-linked (GlcNAc...) asparagine). Residues 347–366 (VILGCLFGPAALYIWAVGLL) form a helical membrane-spanning segment. Topologically, residues 367 to 397 (AAGQSSTMTGTYAGQFVMEGFLKLRWSRFAR) are cytoplasmic. The helical transmembrane segment at 398–415 (VLLTRSCAILPTVLLAVF) threads the bilayer. Over 416–426 (RDLRDLSGLND) the chain is Extracellular. The helical transmembrane segment at 427 to 447 (LLNVLQSLLLPFAVLPILTFT) threads the bilayer. Over 448–463 (SMPALMREFANGLVSK) the chain is Cytoplasmic. A helical membrane pass occupies residues 464–485 (VITSSIMVLVCAVNLYFVISYV). Residues 486–493 (PSLPHPAY) lie on the Extracellular side of the membrane. The helical transmembrane segment at 494–513 (FSLVALLAAAYLGLTTYLVW) threads the bilayer. Over 514–548 (TCLITQGATLLAHSSHQRFLYGLPEEDQEKGRTSG) the chain is Cytoplasmic.

It belongs to the NRAMP family.

It localises to the late endosome membrane. The protein localises to the lysosome membrane. It catalyses the reaction Zn(2+)(in) + H(+)(out) = Zn(2+)(out) + H(+)(in). The catalysed reaction is Fe(2+)(in) + H(+)(out) = Fe(2+)(out) + H(+)(in). It carries out the reaction Mn(2+)(in) + H(+)(out) = Mn(2+)(out) + H(+)(in). Its function is as follows. Macrophage-specific antiporter that fluxes metal ions in either direction against a proton gradient. Localized to late endosomal lysosomal membranes, delivers bivalent cations from the cytosol into these acidic compartments where they may directly affect antimicrobial activity. Involved in iron metabolism and host natural resistance to infection with intracellular parasites. Pathogen resistance involves sequestration of Fe(2+) and Mn(2+), cofactors of both prokaryotic and eukaryotic catalases and superoxide dismutases, not only to protect the macrophage against its own generation of reactive oxygen species, but to deny the cations to the pathogen for synthesis of its protective enzymes. This is Natural resistance-associated macrophage protein 1 (SLC11A1) from Bison bison (American bison).